The sequence spans 243 residues: Nuclear ubiquitous casein and cyclin-dependent kinase substrate 1 (243 aa).

Residues Met-1–Asp-243 are disordered. Residue Tyr-13 is modified to Phosphotyrosine. A phosphoserine mark is found at Ser-14 and Ser-19. At Tyr-26 the chain carries Phosphotyrosine. Residues Lys-35–Gly-51 show a composition bias toward basic residues. Phosphoserine occurs at positions 54, 58, 61, 73, 75, and 79. Residues Lys-64–Glu-77 are compositionally biased toward basic and acidic residues. Over residues Gln-91–Ala-100 the composition is skewed to low complexity. A compositionally biased stretch (acidic residues) spans Val-111–Pro-124. Residues Ser-113, Ser-130, Ser-132, and Ser-144 each carry the phosphoserine modification. Residues Ser-132 to Asp-145 are compositionally biased toward acidic residues. Residues Ser-149 to Leu-174 show a composition bias toward basic residues. Thr-179 is modified (phosphothreonine). Ser-181 is modified (phosphoserine). The segment covering Thr-197–Lys-206 has biased composition (basic and acidic residues). A Phosphothreonine modification is found at Thr-202. 6 positions are modified to phosphoserine: Ser-204, Ser-214, Ser-223, Ser-229, Ser-234, and Ser-240. Residues Glu-232–Asp-243 show a composition bias toward acidic residues.

As to quaternary structure, does not interact with RAD51. In terms of processing, phosphorylated in an ATM-dependent manner in response to DNA damage. Phosphorylated by CDK1 and casein kinase.

The protein localises to the nucleus. It localises to the chromosome. In terms of biological role, chromatin-associated protein involved in DNA repair by promoting homologous recombination (HR). Binds double-stranded DNA (dsDNA) and secondary DNA structures, such as D-loop structures, but with less affinity than RAD51AP1. This is Nuclear ubiquitous casein and cyclin-dependent kinase substrate 1 from Rattus norvegicus (Rat).